Here is a 282-residue protein sequence, read N- to C-terminus: Pantothenate synthetase (282 aa).

Position 30-37 (30-37) interacts with ATP; sequence MGFLHDGH. Histidine 37 serves as the catalytic Proton donor. Glutamine 60 lines the (R)-pantoate pocket. Beta-alanine is bound at residue glutamine 60. 146–149 provides a ligand contact to ATP; that stretch reads GQKD. Glutamine 152 is a binding site for (R)-pantoate. ATP-binding positions include isoleucine 175 and 183 to 186; that span reads KSSR.

This sequence belongs to the pantothenate synthetase family. In terms of assembly, homodimer.

It is found in the cytoplasm. It carries out the reaction (R)-pantoate + beta-alanine + ATP = (R)-pantothenate + AMP + diphosphate + H(+). It participates in cofactor biosynthesis; (R)-pantothenate biosynthesis; (R)-pantothenate from (R)-pantoate and beta-alanine: step 1/1. Catalyzes the condensation of pantoate with beta-alanine in an ATP-dependent reaction via a pantoyl-adenylate intermediate. In Campylobacter jejuni subsp. jejuni serotype O:6 (strain 81116 / NCTC 11828), this protein is Pantothenate synthetase.